The chain runs to 393 residues: Squamosa promoter-binding-like protein 17 (393 aa).

A compositionally biased stretch (low complexity) spans 40–49; the sequence is AAAVESSSTS. A disordered region spans residues 40–67; that stretch reads AAAVESSSTSSGGGGKKGKGVAAAAAPP. An SBP-type zinc finger spans residues 71-148; that stretch reads PPRCQVEGCG…AGHNERRRKP (78 aa). Positions 74, 79, 96, 99, 115, 118, 122, and 134 each coordinate Zn(2+). Positions 131–147 match the Bipartite nuclear localization signal motif; that stretch reads KKSCRRRLAGHNERRRK. Positions 137–148 are enriched in basic residues; it reads RLAGHNERRRKP. Disordered stretches follow at residues 137–158, 273–301, and 317–393; these read RLAG…SRYG, WDTT…GNNP, and GWNS…NWSL. Polar residues-rich tracts occupy residues 273–293 and 380–393; these read WDTT…STAS and GAFS…NWSL.

As to expression, expressed in young panicles.

The protein localises to the nucleus. Trans-acting factor that binds specifically to the consensus nucleotide sequence 5'-TNCGTACAA-3'. May be involved in panicle development. In Oryza sativa subsp. japonica (Rice), this protein is Squamosa promoter-binding-like protein 17 (SPL17).